Reading from the N-terminus, the 498-residue chain is Glycylpeptide N-tetradecanoyltransferase 2 (498 aa).

The tract at residues 1-87 (MAEDSESAAS…QPPSKNSTIP (87 aa)) is disordered. The span at 15-32 (ELDDQDTCGIDGDNEEET) shows a compositional bias: acidic residues. At serine 38 the chain carries Phosphoserine. Residues 46–57 (KKKKKKQKRKKE) are compositionally biased toward basic residues. Residues 61-72 (SGGTKSDSASDS) are compositionally biased toward polar residues. Residues histidine 117, tryptophan 122, leucine 250, valine 252, serine 258, arginine 260, valine 261, and alanine 262 each coordinate tetradecanoyl-CoA.

It belongs to the NMT family.

Its subcellular location is the cytoplasm. The protein localises to the membrane. The catalysed reaction is N-terminal glycyl-[protein] + tetradecanoyl-CoA = N-tetradecanoylglycyl-[protein] + CoA + H(+). The enzyme catalyses N-terminal glycyl-L-lysyl-[protein] + tetradecanoyl-CoA = N-terminal glycyl-(N(6)-tetradecanoyl)-L-lysyl-[protein] + CoA + H(+). Adds a myristoyl group to the N-terminal glycine residue of certain cellular and viral proteins. Also able to mediate N-terminal lysine myristoylation of proteins: catalyzes myristoylation of ARF6 on both 'Gly-2' and 'Lys-3'. Lysine myristoylation is required to maintain ARF6 on membranes during the GTPase cycle. The polypeptide is Glycylpeptide N-tetradecanoyltransferase 2 (NMT2) (Bos taurus (Bovine)).